A 1955-amino-acid polypeptide reads, in one-letter code: Rootletin (1955 aa).

5 coiled-coil regions span residues E29 to E58, E162 to T223, L284 to S1303, V1368 to R1579, and R1607 to G1863. Disordered stretches follow at residues V321–R341, L391–D451, L504–K551, E907–V935, and R961–L998. 2 stretches are compositionally biased toward basic and acidic residues: residues M326–R341 and G396–D451. Composition is skewed to basic and acidic residues over residues E907–K931, R961–L982, and E989–L998.

The protein belongs to the rootletin family. As to expression, expressed in head ciliated neurons.

It is found in the cytoplasm. It localises to the cytoskeleton. The protein resides in the cilium basal body. Its subcellular location is the cilium axoneme. Its function is as follows. Major structural component of the ciliary rootlet, a cytoskeletal-like structure in ciliated cells which originates from the basal body at the proximal end of a cilium and extends proximally toward the cell nucleus. Required for cilia integrity and function in sensory neurons. Maintains cilia integrity, partly by modulating the assembly and transport of intraflagellar proteins along the ciliary axoneme. Required for normal mating behavior and normal responses to environmental and chemical stimuli. The protein is Rootletin of Caenorhabditis elegans.